A 210-amino-acid polypeptide reads, in one-letter code: Protein GET1 (210 aa).

At 1 to 4 (MASL) the chain is on the lumenal side. Residues 5–24 (LIIVFLSHVVTYLINTIGAT) traverse the membrane as a helical segment. Topologically, residues 25-110 (TVDNLLWLLY…SFDLTVKSVR (86 aa)) are cytoplasmic. Residues 43–97 (RTAVEQRRLKGEVVQLKREMKSTSSQDEFAKWAKLRRRHDKAMEEYEAKNKALGK) adopt a coiled-coil conformation. A helical membrane pass occupies residues 111–131 (FFSTTGLKFFLQFWYSKTPMF). The Lumenal segment spans residues 132 to 155 (ELPRGWVPWQVEWVLSFPRAPLGT). A helical membrane pass occupies residues 156–172 (VSIQVWSGVCTTVVSLA). Over 173-210 (GDALGVVIQSLILKMTKRGVARTSEGRPSQPMALKKEL) the chain is Cytoplasmic.

This sequence belongs to the WRB/GET1 family. Interacts with GET3.

Its subcellular location is the endoplasmic reticulum membrane. In terms of biological role, required for the post-translational delivery of tail-anchored (TA) proteins to the endoplasmic reticulum. Acts as a membrane receptor for soluble GET3, which recognizes and selectively binds the transmembrane domain of TA proteins in the cytosol. This is Protein GET1 from Uncinocarpus reesii (strain UAMH 1704).